The chain runs to 124 residues: MAITKDDILEAVSAMSVMELNDLVKAFEDKFGVSAAAVAVAGPAGGAAAPAAEEKTEFDVILKGAGANKVGVIKAVREITGLGLKEAKDLVDGAPKTVKEAMPKADADAAAKKLIEAGAEVEVK.

It belongs to the bacterial ribosomal protein bL12 family. Homodimer. Part of the ribosomal stalk of the 50S ribosomal subunit. Forms a multimeric L10(L12)X complex, where L10 forms an elongated spine to which 2 to 4 L12 dimers bind in a sequential fashion. Binds GTP-bound translation factors.

Its function is as follows. Forms part of the ribosomal stalk which helps the ribosome interact with GTP-bound translation factors. Is thus essential for accurate translation. The protein is Large ribosomal subunit protein bL12 of Ralstonia nicotianae (strain ATCC BAA-1114 / GMI1000) (Ralstonia solanacearum).